We begin with the raw amino-acid sequence, 276 residues long: 4-deoxy-L-threo-5-hexosulose-uronate ketol-isomerase (276 aa).

Zn(2+)-binding residues include His-194, His-196, Glu-201, and His-243.

Belongs to the KduI family. Zn(2+) is required as a cofactor.

The catalysed reaction is 5-dehydro-4-deoxy-D-glucuronate = 3-deoxy-D-glycero-2,5-hexodiulosonate. Its pathway is glycan metabolism; pectin degradation; 2-dehydro-3-deoxy-D-gluconate from pectin: step 4/5. Functionally, catalyzes the isomerization of 5-dehydro-4-deoxy-D-glucuronate to 3-deoxy-D-glycero-2,5-hexodiulosonate. This is 4-deoxy-L-threo-5-hexosulose-uronate ketol-isomerase from Shouchella clausii (strain KSM-K16) (Alkalihalobacillus clausii).